The primary structure comprises 371 residues: Putative glutamate--cysteine ligase 2 (371 aa).

Belongs to the glutamate--cysteine ligase type 2 family. YbdK subfamily.

The catalysed reaction is L-cysteine + L-glutamate + ATP = gamma-L-glutamyl-L-cysteine + ADP + phosphate + H(+). In terms of biological role, ATP-dependent carboxylate-amine ligase which exhibits weak glutamate--cysteine ligase activity. This Paraburkholderia xenovorans (strain LB400) protein is Putative glutamate--cysteine ligase 2.